A 268-amino-acid chain; its full sequence is AN1-type zinc finger protein 1 (268 aa).

An N-acetylalanine modification is found at A2. 2 consecutive AN1-type zinc fingers follow at residues 4 to 52 and 58 to 106; these read LDIG…VINE and QHTS…IPKP. 16 residues coordinate Zn(2+): C10, C15, C25, C28, C33, H36, H42, C44, C64, C69, C79, C82, C87, H90, H96, and C98. The tract at residues 160-260 is ubiquitin-like; that stretch reads QTERIYFQVF…EYLNDEEQFC (101 aa).

Associates with the 26S proteasome; this association occurs upon exposure to arsenite and is reduced in the presence of ATP. Interacts (via AN1-type 1 and 2 zinc fingers) with PSMD1; this interaction is increased upon arsenite treatment and occurs in an ATP-independent manner. Interacts with PSMC4. Interacts with PSMA1. Interacts (via its ubiquitin-like region) with VCP; this interaction occurs in an arsenite-dependent manner and is necessary for the recruitment of the ubiquitin-selective ATPase VCP to stress granules (SGs).

The protein resides in the cytoplasm. The protein localises to the stress granule. Plays a role in the regulation of cytoplasmic stress granules (SGs) turnover. SGs are dynamic and transient cytoplasmic ribonucleoprotein assemblies important for cellular protein homeostasis when protein production is suspended after acute exogenous stress. Associates with SGs and is involved in the efficient and specific arsenite-induced clearance process of SGs through the recruitment of the ubiquitin-selective ATPase VCP and the 26S proteasome. This process requires both complexes for efficient degradation of damaged ubiquitinated SG proteins during recovery from arsenite stress, and hence avoiding aberrant cytoplasmic SGs degradation via autophagy. This Homo sapiens (Human) protein is AN1-type zinc finger protein 1.